The chain runs to 182 residues: Peptidoglycan recognition protein (182 aa).

A signal peptide spans 1–16; it reads MEILFVLFFVFVTVSG. 2 cysteine pairs are disulfide-bonded: Cys-18-Cys-140 and Cys-54-Cys-60. One can recognise an N-acetylmuramoyl-L-alanine amidase domain in the interval 39–166; the sequence is RPVELVIIQH…RQLISTESPG (128 aa).

It belongs to the N-acetylmuramoyl-L-alanine amidase 2 family. Monomer. Strongly expressed in fat body with weak expression observed in hemocyte. No expression detected in gut.

Functionally, binds specifically to peptidoglycan and triggers the propenoloxidase cascade which is an important insect innate immune defense mechanism. The chain is Peptidoglycan recognition protein (PGRP) from Trichoplusia ni (Cabbage looper).